The following is a 1011-amino-acid chain: Poly [ADP-ribose] polymerase 1 (1011 aa).

2 consecutive PARP-type zinc fingers follow at residues 9–91 (YRAE…ETGA) and 113–203 (FAAE…PATK). 8 residues coordinate Zn(2+): Cys21, Cys24, His53, Cys56, Cys125, Cys128, His159, and Cys162. Positions 198–235 (QLPATKTEGKRKGEEVDGNVVAKKKSRKEKEKESKQEK) are disordered. 2 consecutive short sequence motifs (nuclear localization signal) follow at residues 207-209 (KRK) and 220-225 (KKKSRK). Positions 224-358 (RKEKEKESKQ…CKKQDRIFPP (135 aa)) constitute a PADR1 zinc-binding domain. Residues 225-235 (KEKEKESKQEK) show a composition bias toward basic and acidic residues. A zinc ribbon region spans residues 289 to 331 (GALLPCEECKGQFVFKSDAYYCSGDITAWTKCVAKTQTPNRKD). Zn(2+) contacts are provided by Cys294, Cys297, Cys310, and Cys320. Residues 359 to 378 (EAATVNSAPPPPASAPLTET) form a disordered region. The segment at 371–522 (ASAPLTETVT…PSKSEKKMKL (152 aa)) is automodification domain. The 92-residue stretch at 382–473 (PQDKPLTNMK…KGFQELLSLH (92 aa)) folds into the BRCT domain. A polyADP-ribosyl glutamic acid mark is found at Glu403, Glu404, Glu410, Glu411, Glu432, Glu434, Glu441, Glu442, Glu453, Glu454, Glu468, Glu481, Glu485, Glu488, Glu509, Glu510, and Glu517. Residues 496 to 519 (SKPANMKSAGKVKEEQGPSKSEKK) form a disordered region. Residues 506-519 (KVKEEQGPSKSEKK) are compositionally biased toward basic and acidic residues. Positions 539-635 (SAHVFEKGGK…KNFTKYPKKF (97 aa)) constitute a WGR domain. The PARP alpha-helical domain maps to 659 to 776 (KSKLAKPIQD…DIEVAYSLLR (118 aa)). The PARP catalytic domain maps to 785–1011 (DPIDINYEKL…LKFNYKTSLW (227 aa)). Residues 859–861 (HGS), Gly868, Arg875, and Ser901 each bind NAD(+). Residue Glu985 is the For poly [ADP-ribose] polymerase activity of the active site.

Belongs to the ARTD/PARP family. Homodimer; PARP-type zinc-fingers from separate parp1 molecules form a dimer module that specifically recognizes DNA strand breaks. Post-translationally, poly-ADP-ribosylated on serine, glutamate and aspartate residues by autocatalysis. Auto-ADP-ribosylation on serine takes place following interaction with HPF1. Auto poly-ADP-ribosylation on serine residues promotes its dissociation from chromatin.

The protein localises to the chromosome. The protein resides in the nucleus. Its subcellular location is the nucleolus. It is found in the cytoplasm. It localises to the cytosol. The catalysed reaction is NAD(+) + (ADP-D-ribosyl)n-acceptor = nicotinamide + (ADP-D-ribosyl)n+1-acceptor + H(+).. It catalyses the reaction L-seryl-[protein] + NAD(+) = O-(ADP-D-ribosyl)-L-seryl-[protein] + nicotinamide + H(+). It carries out the reaction L-aspartyl-[protein] + NAD(+) = 4-O-(ADP-D-ribosyl)-L-aspartyl-[protein] + nicotinamide. The enzyme catalyses L-glutamyl-[protein] + NAD(+) = 5-O-(ADP-D-ribosyl)-L-glutamyl-[protein] + nicotinamide. The catalysed reaction is L-tyrosyl-[protein] + NAD(+) = O-(ADP-D-ribosyl)-L-tyrosyl-[protein] + nicotinamide + H(+). It catalyses the reaction L-histidyl-[protein] + NAD(+) = N(tele)-(ADP-D-ribosyl)-L-histidyl-[protein] + nicotinamide + H(+). ADP-ribosyltransferase activity is regulated via an allosteric activation mechanism. In absence of activation signal, parp1 is autoinhibited by the PARP alpha-helical domain (also named HD region), which prevents effective NAD(+)-binding. Activity is highly stimulated by signals, such as DNA strand breaks. Binding to damaged DNA unfolds the PARP alpha-helical domain, relieving autoinhibition. Poly-ADP-ribosyltransferase activity is tightly regulated and parp1 is removed from damaged chromatin following initial poly-ADP-ribosylation of chromatin to avoid prolonged residence (trapping) that has cytotoxic consequences. A number of factors or post-translational modifications (auto-poly-ADP-ribosylation) promote parp1 removal from chromatin. Functionally, poly-ADP-ribosyltransferase that mediates poly-ADP-ribosylation of proteins and plays a key role in DNA repair. Mediates glutamate, aspartate, serine, histidine or tyrosine ADP-ribosylation of proteins: the ADP-D-ribosyl group of NAD(+) is transferred to the acceptor carboxyl group of target residues and further ADP-ribosyl groups are transferred to the 2'-position of the terminal adenosine moiety, building up a polymer with an average chain length of 20-30 units. Serine ADP-ribosylation of proteins constitutes the primary form of ADP-ribosylation of proteins in response to DNA damage. Specificity for the different amino acids is conferred by interacting factors, such as hpf1 and nmnat1. Following interaction with hpf1, catalyzes serine ADP-ribosylation of target proteins; hpf1 confers serine specificity by completing the parp1 active site. Also catalyzes tyrosine ADP-ribosylation of target proteins following interaction with hpf1. Following interaction with nmnat1, catalyzes glutamate and aspartate ADP-ribosylation of target proteins; nmnat1 confers glutamate and aspartate specificity. Parp1 initiates the repair of DNA breaks: recognizes and binds DNA breaks within chromatin and recruits hpf1, licensing serine ADP-ribosylation of target proteins, such as histones (H2BS6ADPr and H3S10ADPr), thereby promoting decompaction of chromatin and the recruitment of repair factors leading to the reparation of DNA strand breaks. In addition to base excision repair (BER) pathway, also involved in double-strand breaks (DSBs) repair. Mediates the poly-ADP-ribosylation of a number of proteins. In addition to proteins, also able to ADP-ribosylate DNA: catalyzes ADP-ribosylation of DNA strand break termini containing terminal phosphates and a 2'-OH group in single- and double-stranded DNA, respectively. Parp1-mediated DNA repair in neurons plays a role in sleep: senses DNA damage in neurons and promotes sleep, facilitating efficient DNA repair. In addition to DNA repair, also involved in other processes, such as transcription regulation, programmed cell death, membrane repair, adipogenesis and innate immunity. Acts as a repressor of transcription: binds to nucleosomes and modulates chromatin structure in a manner similar to histone H1, thereby altering RNA polymerase II. Acts both as a positive and negative regulator of transcription elongation, depending on the context. Poly-ADP-ribose chains generated by parp1 also play a role in poly-ADP-ribose-dependent cell death, a process named parthanatos. Also acts as a negative regulator of the cGAS-STING pathway by mediating poly-ADP-ribosylation and inactivation of cgas. Acts as a negative regulator of adipogenesis by catalyzing poly ADP-ribosylation of histone H2B on 'Glu-35' (H2BE35ADPr). This chain is Poly [ADP-ribose] polymerase 1 (PARP1), found in Gallus gallus (Chicken).